Consider the following 38-residue polypeptide: Mu-agatoxin-Hc1c (38 aa).

Disulfide bonds link cysteine 3/cysteine 19, cysteine 10/cysteine 24, cysteine 18/cysteine 34, and cysteine 26/cysteine 32. A Serine amide modification is found at serine 38.

It belongs to the neurotoxin 07 (Beta/delta-agtx) family. 02 (aga-3) subfamily. As to expression, expressed by the venom gland.

It localises to the secreted. In terms of biological role, insecticidal neurotoxin that induces irreversible neuromuscular blockade in house crickets (A.domesticus). Modifies presynaptic voltage-gated sodium channels (Nav), causing them to open at the normal resting potential of the nerve. This leads to spontaneous release of neurotransmitter and repetitive action potentials in motor neurons. This chain is Mu-agatoxin-Hc1c, found in Hololena curta (Funnel-web spider).